The chain runs to 327 residues: Cobalamin biosynthesis protein CobD (327 aa).

A run of 4 helical transmembrane segments spans residues 63–83, 84–104, 158–178, and 305–325; these read VGIL…ARLF, DVLG…FLAQ, FSDG…PGLL, and VFYA…LPLL.

It belongs to the CobD/CbiB family.

The protein localises to the cell membrane. It functions in the pathway cofactor biosynthesis; adenosylcobalamin biosynthesis. Its function is as follows. Converts cobyric acid to cobinamide by the addition of aminopropanol on the F carboxylic group. In Rhizobium meliloti (strain 1021) (Ensifer meliloti), this protein is Cobalamin biosynthesis protein CobD.